A 422-amino-acid chain; its full sequence is Phytoene synthase 1, chloroplastic (422 aa).

The N-terminal 70 residues, 1–70, are a transit peptide targeting the chloroplast; sequence MSSSVAVLWV…NRSRRIGVVS (70 aa).

It belongs to the phytoene/squalene synthase family. In terms of assembly, monomer. Interacts with OR. Interacts with ORLIKE.

Its subcellular location is the plastid. It is found in the chloroplast membrane. The catalysed reaction is 2 (2E,6E,10E)-geranylgeranyl diphosphate = 15-cis-phytoene + 2 diphosphate. Its pathway is carotenoid biosynthesis; phytoene biosynthesis; all-trans-phytoene from geranylgeranyl diphosphate: step 1/1. Functionally, catalyzes the reaction from prephytoene diphosphate to phytoene. The protein is Phytoene synthase 1, chloroplastic of Arabidopsis thaliana (Mouse-ear cress).